We begin with the raw amino-acid sequence, 346 residues long: uncharacterized protein (346 aa).

The protein belongs to the MG067/MG068/MG395 family.

This is an uncharacterized protein from Mycoplasma pneumoniae (strain ATCC 29342 / M129 / Subtype 1) (Mycoplasmoides pneumoniae).